Here is a 333-residue protein sequence, read N- to C-terminus: 4-hydroxy-3-methylbut-2-enyl diphosphate reductase (333 aa).

Cys-33 provides a ligand contact to [4Fe-4S] cluster. (2E)-4-hydroxy-3-methylbut-2-enyl diphosphate is bound by residues His-62 and His-95. His-62 and His-95 together coordinate dimethylallyl diphosphate. Isopentenyl diphosphate contacts are provided by His-62 and His-95. Residue Cys-117 participates in [4Fe-4S] cluster binding. His-145 is a (2E)-4-hydroxy-3-methylbut-2-enyl diphosphate binding site. His-145 provides a ligand contact to dimethylallyl diphosphate. Residue His-145 coordinates isopentenyl diphosphate. Glu-147 functions as the Proton donor in the catalytic mechanism. Thr-186 lines the (2E)-4-hydroxy-3-methylbut-2-enyl diphosphate pocket. Residue Cys-216 coordinates [4Fe-4S] cluster. Residues Ser-244, Ser-245, Asn-246, and Ser-289 each coordinate (2E)-4-hydroxy-3-methylbut-2-enyl diphosphate. Positions 244, 245, 246, and 289 each coordinate dimethylallyl diphosphate. Residues Ser-244, Ser-245, Asn-246, and Ser-289 each contribute to the isopentenyl diphosphate site.

It belongs to the IspH family. [4Fe-4S] cluster serves as cofactor.

It carries out the reaction isopentenyl diphosphate + 2 oxidized [2Fe-2S]-[ferredoxin] + H2O = (2E)-4-hydroxy-3-methylbut-2-enyl diphosphate + 2 reduced [2Fe-2S]-[ferredoxin] + 2 H(+). It catalyses the reaction dimethylallyl diphosphate + 2 oxidized [2Fe-2S]-[ferredoxin] + H2O = (2E)-4-hydroxy-3-methylbut-2-enyl diphosphate + 2 reduced [2Fe-2S]-[ferredoxin] + 2 H(+). Its pathway is isoprenoid biosynthesis; dimethylallyl diphosphate biosynthesis; dimethylallyl diphosphate from (2E)-4-hydroxy-3-methylbutenyl diphosphate: step 1/1. The protein operates within isoprenoid biosynthesis; isopentenyl diphosphate biosynthesis via DXP pathway; isopentenyl diphosphate from 1-deoxy-D-xylulose 5-phosphate: step 6/6. Catalyzes the conversion of 1-hydroxy-2-methyl-2-(E)-butenyl 4-diphosphate (HMBPP) into a mixture of isopentenyl diphosphate (IPP) and dimethylallyl diphosphate (DMAPP). Acts in the terminal step of the DOXP/MEP pathway for isoprenoid precursor biosynthesis. The sequence is that of 4-hydroxy-3-methylbut-2-enyl diphosphate reductase from Corynebacterium diphtheriae (strain ATCC 700971 / NCTC 13129 / Biotype gravis).